Here is a 196-residue protein sequence, read N- to C-terminus: Fucoxanthin-chlorophyll a-c binding protein A, chloroplastic (196 aa).

Residues 1–31 constitute a chloroplast transit peptide; that stretch reads MKFAVFASLLASRAAFAPAQQSARTSVATNM. The next 3 membrane-spanning stretches (helical) occupy residues 73–94, 114–134, and 174–196; these read ICML…PGDI, VPGA…IAVM, and GRAA…SILP.

Belongs to the fucoxanthin chlorophyll protein family. In terms of assembly, the LHC complex of chromophytic algae is composed of fucoxanthin, chlorophyll A and C bound non-covalently by fucoxanthin chlorophyll proteins (FCPs). The ratio of the pigments in LHC; fucoxanthin: chlorophyll C: chlorophyll A; (0.6-1): (0.1-0.3): (1).

It is found in the plastid. Its subcellular location is the chloroplast thylakoid membrane. Its function is as follows. The light-harvesting complex (LHC) functions as a light receptor, it captures and delivers excitation energy to photosystems with which it is closely associated. Energy is transferred from the carotenoid and chlorophyll C (or B) to chlorophyll A and the photosynthetic reaction centers where it is used to synthesize ATP and reducing power. The protein is Fucoxanthin-chlorophyll a-c binding protein A, chloroplastic (FCPA) of Phaeodactylum tricornutum (Diatom).